The chain runs to 340 residues: MKSLVKAKKEPGIWMQDIPVPEYGVNDVLIKIKRTAICGTDIHIYSWDEWAQATIPVPMTVGHEFYGEIVEVGKEVQGLKVGQRVSGEGHITCGFCRNCRAGKRHLCRNTLGVGVNRPGCFAEYLALPATNVIALPDNITEEQAAILDPFGNAAHCALAFDVVGEDVLITGAGPIGIMAAAIVRHIGARHVVITDVNDHRLELARQMGVSRAVNVKYQKLSDVANELGMLEGFDVGLEMSGNPMALNDMMKAMNHGGHVALLGIPPQETPIDWNQVIFKGLVIKGIYGREMFETWYKMIAMLQSGLNISPVITHNFPVDEYQHAFQIMASGQSGKVILNW.

Cys38 contributes to the Zn(2+) binding site. Active-site charge relay system residues include Thr40 and His43. Residues His63, Glu64, Cys93, Cys96, Cys99, and Cys107 each coordinate Zn(2+). Residues Ile175, Asp195, Arg200, 262-264 (LGI), and 286-287 (IY) contribute to the NAD(+) site.

This sequence belongs to the zinc-containing alcohol dehydrogenase family. Homotetramer. The cofactor is Zn(2+).

It localises to the cytoplasm. The catalysed reaction is L-threonine + NAD(+) = (2S)-2-amino-3-oxobutanoate + NADH + H(+). The protein operates within amino-acid degradation; L-threonine degradation via oxydo-reductase pathway; glycine from L-threonine: step 1/2. In terms of biological role, catalyzes the NAD(+)-dependent oxidation of L-threonine to 2-amino-3-ketobutyrate. The chain is L-threonine 3-dehydrogenase from Legionella pneumophila subsp. pneumophila (strain Philadelphia 1 / ATCC 33152 / DSM 7513).